Here is a 114-residue protein sequence, read N- to C-terminus: MTTKIERRVKIKYRVRNKISGTAERPRMSVFRSNKQIYVQIIDDLSGKTLAAASSLGMAEKVAKKEQAAKVGEMIAKKAQEAGITTVVFDRNGYLYHGRVKEVADAARNGGLKF.

The protein belongs to the universal ribosomal protein uL18 family. Part of the 50S ribosomal subunit; part of the 5S rRNA/L5/L18/L25 subcomplex. Contacts the 5S and 23S rRNAs.

In terms of biological role, this is one of the proteins that bind and probably mediate the attachment of the 5S RNA into the large ribosomal subunit, where it forms part of the central protuberance. The sequence is that of Large ribosomal subunit protein uL18 from Bacteroides thetaiotaomicron (strain ATCC 29148 / DSM 2079 / JCM 5827 / CCUG 10774 / NCTC 10582 / VPI-5482 / E50).